Here is a 209-residue protein sequence, read N- to C-terminus: Ribosomal RNA large subunit methyltransferase E (209 aa).

Residues Gly-63, Trp-65, Asp-83, Asp-99, and Asp-124 each coordinate S-adenosyl-L-methionine. Lys-164 serves as the catalytic Proton acceptor.

It belongs to the class I-like SAM-binding methyltransferase superfamily. RNA methyltransferase RlmE family.

It localises to the cytoplasm. It carries out the reaction uridine(2552) in 23S rRNA + S-adenosyl-L-methionine = 2'-O-methyluridine(2552) in 23S rRNA + S-adenosyl-L-homocysteine + H(+). Functionally, specifically methylates the uridine in position 2552 of 23S rRNA at the 2'-O position of the ribose in the fully assembled 50S ribosomal subunit. The protein is Ribosomal RNA large subunit methyltransferase E of Pectobacterium atrosepticum (strain SCRI 1043 / ATCC BAA-672) (Erwinia carotovora subsp. atroseptica).